Consider the following 401-residue polypeptide: Probable cysteine desulfurase (401 aa).

An N6-(pyridoxal phosphate)lysine modification is found at lysine 223.

The protein belongs to the class-V pyridoxal-phosphate-dependent aminotransferase family. Csd subfamily. Requires pyridoxal 5'-phosphate as cofactor.

The catalysed reaction is (sulfur carrier)-H + L-cysteine = (sulfur carrier)-SH + L-alanine. Catalyzes the removal of elemental sulfur and selenium atoms from L-cysteine, L-cystine, L-selenocysteine, and L-selenocystine to produce L-alanine. This is Probable cysteine desulfurase (csdA) from Pseudomonas putida (strain ATCC 47054 / DSM 6125 / CFBP 8728 / NCIMB 11950 / KT2440).